The sequence spans 639 residues: Putative cyclic beta-1,2-glucan modification protein (639 aa).

Transmembrane regions (helical) follow at residues 34-54, 69-89, 96-116, 144-164, 185-205, and 227-247; these read ALFT…IVRW, PAWT…ALFG, LLIA…QVFL, WTAV…ALLL, FALP…FSWI, and FALA…AGYM.

The protein localises to the cell membrane. In Rhizobium meliloti (strain 1021) (Ensifer meliloti), this protein is Putative cyclic beta-1,2-glucan modification protein (cgmA).